Here is a 562-residue protein sequence, read N- to C-terminus: Potassium-transporting ATPase potassium-binding subunit (562 aa).

Helical transmembrane passes span 6–26 (FLLI…LGGF), 63–83 (ALAI…LLMA), 132–152 (GLTV…FALI), 175–195 (LYVL…QGVL), 253–273 (FVQM…FGQV), 283–303 (LIWA…YAEL), 327–347 (FGIL…CGAV), 356–376 (ALGG…FGGV), 379–399 (GLYG…LMIG), 416–436 (MTAL…ALAL), 483–503 (LLLA…VLAI), and 526–546 (LFIG…FIPA).

Belongs to the KdpA family. The system is composed of three essential subunits: KdpA, KdpB and KdpC.

The protein resides in the cell inner membrane. Part of the high-affinity ATP-driven potassium transport (or Kdp) system, which catalyzes the hydrolysis of ATP coupled with the electrogenic transport of potassium into the cytoplasm. This subunit binds the periplasmic potassium ions and delivers the ions to the membrane domain of KdpB through an intramembrane tunnel. The sequence is that of Potassium-transporting ATPase potassium-binding subunit from Yersinia pseudotuberculosis serotype O:1b (strain IP 31758).